Here is a 366-residue protein sequence, read N- to C-terminus: 3-dehydroquinate synthase (366 aa).

NAD(+) contacts are provided by residues 75–80 (DGEQYK), 109–113 (GVIGD), 133–134 (TT), Lys146, Lys155, and 173–176 (CLST). Residues Glu188, His251, and His268 each coordinate Zn(2+).

The protein belongs to the sugar phosphate cyclases superfamily. Dehydroquinate synthase family. It depends on Co(2+) as a cofactor. Zn(2+) serves as cofactor. NAD(+) is required as a cofactor.

The protein resides in the cytoplasm. The catalysed reaction is 7-phospho-2-dehydro-3-deoxy-D-arabino-heptonate = 3-dehydroquinate + phosphate. The protein operates within metabolic intermediate biosynthesis; chorismate biosynthesis; chorismate from D-erythrose 4-phosphate and phosphoenolpyruvate: step 2/7. Catalyzes the conversion of 3-deoxy-D-arabino-heptulosonate 7-phosphate (DAHP) to dehydroquinate (DHQ). The protein is 3-dehydroquinate synthase of Vibrio campbellii (strain ATCC BAA-1116).